A 339-amino-acid chain; its full sequence is N-acetyl-gamma-glutamyl-phosphate reductase (339 aa).

C145 is a catalytic residue.

The protein belongs to the NAGSA dehydrogenase family. Type 1 subfamily.

It is found in the cytoplasm. The enzyme catalyses N-acetyl-L-glutamate 5-semialdehyde + phosphate + NADP(+) = N-acetyl-L-glutamyl 5-phosphate + NADPH + H(+). It participates in amino-acid biosynthesis; L-arginine biosynthesis; N(2)-acetyl-L-ornithine from L-glutamate: step 3/4. Catalyzes the NADPH-dependent reduction of N-acetyl-5-glutamyl phosphate to yield N-acetyl-L-glutamate 5-semialdehyde. In Thermotoga petrophila (strain ATCC BAA-488 / DSM 13995 / JCM 10881 / RKU-1), this protein is N-acetyl-gamma-glutamyl-phosphate reductase.